Reading from the N-terminus, the 83-residue chain is Exodeoxyribonuclease 7 small subunit (83 aa).

This sequence belongs to the XseB family. In terms of assembly, heterooligomer composed of large and small subunits.

It is found in the cytoplasm. The catalysed reaction is Exonucleolytic cleavage in either 5'- to 3'- or 3'- to 5'-direction to yield nucleoside 5'-phosphates.. Its function is as follows. Bidirectionally degrades single-stranded DNA into large acid-insoluble oligonucleotides, which are then degraded further into small acid-soluble oligonucleotides. The protein is Exodeoxyribonuclease 7 small subunit of Rhizobium meliloti (strain 1021) (Ensifer meliloti).